We begin with the raw amino-acid sequence, 520 residues long: Maturase K (520 aa).

It belongs to the intron maturase 2 family. MatK subfamily.

It localises to the plastid. The protein resides in the chloroplast. Usually encoded in the trnK tRNA gene intron. Probably assists in splicing its own and other chloroplast group II introns. The protein is Maturase K of Galanthus elwesii (Giant snowdrop).